Here is a 493-residue protein sequence, read N- to C-terminus: MQRLKHGLLQAAGWLFYLSLLMGLAAALPTSIFDSQSKNFIFLIGAVGIWRYSMGITHFVRGMIFLYIVYPHLRRKVRKLGSAADPSHVFLMVTSFRIDALTTAQVYSSVIREAIECGLPTTVVCSLVEMSDELLVKSMWAKANPPDRVKLDFVRIPGTGKRDGLAYGFRAISRHMPDDRAVVAVIDGDTVLNEGVVAKTVPWFQLFDNVGGLTTNEFCEVRGGYIMSEWHKLRFAQRHINMCSMALSKRVLTMTGRMSVFRAKVVTDPEFIADVESDSLNHWRLGTFRFLTGDDKSSWFSLMRLGYDTFYVPDAAINTVEHPPEKSFLKASRKLMYRWYGNNLRQNSRALGLGVRRLGIFTSIVLFDQRVSMWTSILGLTVAIIASFKYGGAFLLMYLLWIGMTRLILTLLLSLSGHRIGPAYPMILYYNQIVGALMKIYVFFRLDRQSWTRQDTKLSRDMASFQGWFNTWSSRTMTFSAGTIFVAVLLTMV.

4 helical membrane-spanning segments follow: residues 13–32 (GWLF…PTSI), 47–69 (VGIW…LYIV), 380–402 (LTVA…LLWI), and 422–444 (PAYP…YVFF).

It belongs to the glycosyltransferase 2 family.

The protein resides in the cell membrane. The protein operates within glycan biosynthesis; alginate biosynthesis. In terms of biological role, possibly a processive enzyme that polymerizes GDP-mannuronic acid. This chain is Glycosyltransferase alg8 (alg8), found in Pseudomonas syringae pv. tomato (strain ATCC BAA-871 / DC3000).